Reading from the N-terminus, the 277-residue chain is Sulfate transport system permease protein CysT (277 aa).

A run of 7 helical transmembrane segments spans residues 17-37, 64-84, 99-119, 136-156, 188-205, 215-235, and 243-263; these read LGTS…ALVM, LLAA…MAWI, LMDL…ASLF, VTYT…PFVV, VVLP…ALSF, VIFI…MIFV, and PAAS…LFSI. The ABC transmembrane type-1 domain occupies 60–263; that stretch reads YKVTLLAAFV…AASLLLLFSI (204 aa).

It belongs to the binding-protein-dependent transport system permease family. CysTW subfamily. In terms of assembly, the complex is composed of two ATP-binding proteins (CysA), two transmembrane proteins (CysT and CysW) and a solute-binding protein (CysP).

Its subcellular location is the cell inner membrane. In terms of biological role, part of the ABC transporter complex CysAWTP (TC 3.A.1.6.1) involved in sulfate/thiosulfate import. Probably responsible for the translocation of the substrate across the membrane. The sequence is that of Sulfate transport system permease protein CysT (cysU) from Salmonella typhimurium (strain LT2 / SGSC1412 / ATCC 700720).